The sequence spans 620 residues: Schwann cell myelin protein (620 aa).

The first 17 residues, 1–17 (MELLVLTVLLMGTGCIS), serve as a signal peptide directing secretion. Topologically, residues 18-516 (APWAAWMPPK…GGLVWAKVGP (499 aa)) are extracellular. Residues 28–106 (MAALSGTCVQ…RDCTLNIARL (79 aa)) enclose the Ig-like V-type domain. 3 cysteine pairs are disulfide-bonded: C35-C164, C40-C99, and C158-C216. R117 contributes to the N-acetylneuraminate binding site. Ig-like C2-type domains are found at residues 151–233 (GSEA…DVGL), 239–322 (PQVV…LRVA), 325–407 (PRAP…FNIS), and 414–495 (VLPA…NRHG). N222 is a glycosylation site (N-linked (GlcNAc...) asparagine). C260 and C304 are oxidised to a cystine. N-linked (GlcNAc...) asparagine glycosylation is found at N314 and N331. C346 and C391 are oxidised to a cystine. N-linked (GlcNAc...) asparagine glycosylation occurs at N405. 2 disulfides stabilise this stretch: C420/C429 and C431/C488. N449 carries N-linked (GlcNAc...) asparagine glycosylation. A helical membrane pass occupies residues 517–536 (VGAVVAFAIVIAVVCYLSQS). The Cytoplasmic segment spans residues 537–620 (RRKKGAGSPE…PPEYAEIRVK (84 aa)). 2 disordered regions span residues 539-562 (KKGA…DPDL) and 583-620 (VKEG…IRVK).

It belongs to the immunoglobulin superfamily. SIGLEC (sialic acid binding Ig-like lectin) family. In terms of tissue distribution, exclusively expressed by myelinating and nonmyelinating Schwann cells and oligodendrocytes.

It is found in the membrane. In Coturnix japonica (Japanese quail), this protein is Schwann cell myelin protein (SMP).